The following is a 367-amino-acid chain: UDP-N-acetylglucosamine--N-acetylmuramyl-(pentapeptide) pyrophosphoryl-undecaprenol N-acetylglucosamine transferase (367 aa).

UDP-N-acetyl-alpha-D-glucosamine-binding positions include 22–24, Asn134, Arg170, Ser198, Ile253, and Gln298; that span reads TGG.

Belongs to the glycosyltransferase 28 family. MurG subfamily.

It localises to the cell inner membrane. It catalyses the reaction di-trans,octa-cis-undecaprenyl diphospho-N-acetyl-alpha-D-muramoyl-L-alanyl-D-glutamyl-meso-2,6-diaminopimeloyl-D-alanyl-D-alanine + UDP-N-acetyl-alpha-D-glucosamine = di-trans,octa-cis-undecaprenyl diphospho-[N-acetyl-alpha-D-glucosaminyl-(1-&gt;4)]-N-acetyl-alpha-D-muramoyl-L-alanyl-D-glutamyl-meso-2,6-diaminopimeloyl-D-alanyl-D-alanine + UDP + H(+). Its pathway is cell wall biogenesis; peptidoglycan biosynthesis. Functionally, cell wall formation. Catalyzes the transfer of a GlcNAc subunit on undecaprenyl-pyrophosphoryl-MurNAc-pentapeptide (lipid intermediate I) to form undecaprenyl-pyrophosphoryl-MurNAc-(pentapeptide)GlcNAc (lipid intermediate II). The polypeptide is UDP-N-acetylglucosamine--N-acetylmuramyl-(pentapeptide) pyrophosphoryl-undecaprenol N-acetylglucosamine transferase (Xylella fastidiosa (strain M23)).